A 292-amino-acid chain; its full sequence is Cbb3-type cytochrome c oxidase subunit CcoP (292 aa).

2 consecutive transmembrane segments (helical) span residues 11 to 31 (FGLIAALVILVLTIYESSSLI) and 62 to 82 (VGWIASFMCTIVWAFWYFFFG). Cytochrome c domains follow at residues 116 to 195 (ELVD…MAEI) and 205 to 288 (QLID…QSLK). Residues cysteine 129, cysteine 132, histidine 133, methionine 174, cysteine 219, cysteine 222, histidine 223, and methionine 264 each coordinate heme c.

The protein belongs to the CcoP / FixP family. Component of the cbb3-type cytochrome c oxidase at least composed of CcoN, CcoO, CcoQ and CcoP. Requires heme c as cofactor.

It localises to the cell inner membrane. The protein operates within energy metabolism; oxidative phosphorylation. Functionally, C-type cytochrome. Part of the cbb3-type cytochrome c oxidase complex. CcoP subunit is required for transferring electrons from donor cytochrome c via its heme groups to CcoO subunit. From there, electrons are shuttled to the catalytic binuclear center of CcoN subunit where oxygen reduction takes place. The complex also functions as a proton pump. The protein is Cbb3-type cytochrome c oxidase subunit CcoP of Helicobacter pylori (strain 52).